The sequence spans 380 residues: Erythronate-4-phosphate dehydrogenase (380 aa).

Residues Ser-45 and Thr-66 each contribute to the substrate site. Residues Asp-146, Thr-174, 205–207 (ASR), and Asp-231 contribute to the NAD(+) site. Residue Arg-207 is part of the active site. Glu-236 is an active-site residue. The active-site Proton donor is the His-253. Gly-256 lines the NAD(+) pocket. Position 257 (Tyr-257) interacts with substrate.

The protein belongs to the D-isomer specific 2-hydroxyacid dehydrogenase family. PdxB subfamily. As to quaternary structure, homodimer.

Its subcellular location is the cytoplasm. The enzyme catalyses 4-phospho-D-erythronate + NAD(+) = (R)-3-hydroxy-2-oxo-4-phosphooxybutanoate + NADH + H(+). It participates in cofactor biosynthesis; pyridoxine 5'-phosphate biosynthesis; pyridoxine 5'-phosphate from D-erythrose 4-phosphate: step 2/5. Functionally, catalyzes the oxidation of erythronate-4-phosphate to 3-hydroxy-2-oxo-4-phosphonooxybutanoate. The polypeptide is Erythronate-4-phosphate dehydrogenase (Pseudomonas putida (strain W619)).